Reading from the N-terminus, the 384-residue chain is Anhydro-N-acetylmuramic acid kinase (384 aa).

Residue 17–24 coordinates ATP; that stretch reads GTSMDGVD.

It belongs to the anhydro-N-acetylmuramic acid kinase family.

It catalyses the reaction 1,6-anhydro-N-acetyl-beta-muramate + ATP + H2O = N-acetyl-D-muramate 6-phosphate + ADP + H(+). The protein operates within amino-sugar metabolism; 1,6-anhydro-N-acetylmuramate degradation. It functions in the pathway cell wall biogenesis; peptidoglycan recycling. In terms of biological role, catalyzes the specific phosphorylation of 1,6-anhydro-N-acetylmuramic acid (anhMurNAc) with the simultaneous cleavage of the 1,6-anhydro ring, generating MurNAc-6-P. Is required for the utilization of anhMurNAc either imported from the medium or derived from its own cell wall murein, and thus plays a role in cell wall recycling. This chain is Anhydro-N-acetylmuramic acid kinase, found in Burkholderia thailandensis (strain ATCC 700388 / DSM 13276 / CCUG 48851 / CIP 106301 / E264).